A 400-amino-acid chain; its full sequence is Telomere repeat-binding protein 6 (400 aa).

One can recognise a Ubiquitin-like domain in the interval 173–252; the sequence is VKFGIKSLNI…DDENLGSLGF (80 aa). One can recognise an HTH myb-type domain in the interval 310–369; it reads VQRRIRRPFTVSEVEALVQAVERLGTGRWRDVKSHAFNHVNHRTYVDLKDKWKTLVHTAK. Positions 338–365 form a DNA-binding region, H-T-H motif; it reads WRDVKSHAFNHVNHRTYVDLKDKWKTLV.

Homodimer. As to expression, expressed ubiquitously.

It is found in the nucleus. Its function is as follows. Binds specifically to the plant telomeric double-stranded DNA sequences. At least 4 repeats of telomeric sequences are required for binding. The protein is Telomere repeat-binding protein 6 (TRP6) of Arabidopsis thaliana (Mouse-ear cress).